Reading from the N-terminus, the 216-residue chain is ATP-dependent Clp protease proteolytic subunit (216 aa).

Ser-120 (nucleophile) is an active-site residue. His-145 is a catalytic residue.

The protein belongs to the peptidase S14 family. Fourteen ClpP subunits assemble into 2 heptameric rings which stack back to back to give a disk-like structure with a central cavity, resembling the structure of eukaryotic proteasomes.

It is found in the cytoplasm. The catalysed reaction is Hydrolysis of proteins to small peptides in the presence of ATP and magnesium. alpha-casein is the usual test substrate. In the absence of ATP, only oligopeptides shorter than five residues are hydrolyzed (such as succinyl-Leu-Tyr-|-NHMec, and Leu-Tyr-Leu-|-Tyr-Trp, in which cleavage of the -Tyr-|-Leu- and -Tyr-|-Trp bonds also occurs).. In terms of biological role, cleaves peptides in various proteins in a process that requires ATP hydrolysis. Has a chymotrypsin-like activity. Plays a major role in the degradation of misfolded proteins. The chain is ATP-dependent Clp protease proteolytic subunit from Cupriavidus necator (strain ATCC 17699 / DSM 428 / KCTC 22496 / NCIMB 10442 / H16 / Stanier 337) (Ralstonia eutropha).